Here is a 736-residue protein sequence, read N- to C-terminus: DNA ligase (736 aa).

NAD(+)-binding positions include 41 to 45 (DQEYD), 91 to 92 (SL), and Glu-125. The N6-AMP-lysine intermediate role is filled by Lys-127. NAD(+) is bound at residue Arg-148. Residues 170 to 205 (ELTPLPLAGGAGGGPLDDSGSAPTPDPSRRREGKWN) form a disordered region. Residues Glu-215, Lys-347, and Lys-371 each coordinate NAD(+). Zn(2+)-binding residues include Cys-463, Cys-466, Cys-481, and Cys-487. In terms of domain architecture, BRCT spans 656–736 (TLDSPVAGKT…GWAEIVAAAG (81 aa)).

Belongs to the NAD-dependent DNA ligase family. LigA subfamily. Mg(2+) serves as cofactor. The cofactor is Mn(2+).

The catalysed reaction is NAD(+) + (deoxyribonucleotide)n-3'-hydroxyl + 5'-phospho-(deoxyribonucleotide)m = (deoxyribonucleotide)n+m + AMP + beta-nicotinamide D-nucleotide.. Its function is as follows. DNA ligase that catalyzes the formation of phosphodiester linkages between 5'-phosphoryl and 3'-hydroxyl groups in double-stranded DNA using NAD as a coenzyme and as the energy source for the reaction. It is essential for DNA replication and repair of damaged DNA. The protein is DNA ligase of Erythrobacter litoralis (strain HTCC2594).